Consider the following 139-residue polypeptide: Prostate-associated microseminoprotein (139 aa).

The signal sequence occupies residues 1–35; it reads MALRMLWAGQAKGILGGWRTICLVVSLFLQHPGVS. 5 disulfides stabilise this stretch: cysteine 38/cysteine 78, cysteine 46/cysteine 69, cysteine 64/cysteine 100, cysteine 67/cysteine 77, and cysteine 91/cysteine 114. The tract at residues 116–139 is disordered; it reads GGGPDLEWGSANTPAPGASAPHSS.

This sequence belongs to the beta-microseminoprotein family.

It is found in the secreted. In terms of biological role, acts as a ligand for C-C chemokine receptor CCR2. Signals through binding and activation of CCR2 and induces a strong chemotactic response and mobilization of intracellular calcium ions. Exhibits a chemotactic activity for monocytes and lymphocytes but not neutrophils. This Mus musculus (Mouse) protein is Prostate-associated microseminoprotein (Msmp).